The sequence spans 466 residues: L-seryl-tRNA(Sec) selenium transferase (466 aa).

Lys294 carries the N6-(pyridoxal phosphate)lysine modification.

It belongs to the SelA family. The cofactor is pyridoxal 5'-phosphate.

Its subcellular location is the cytoplasm. The enzyme catalyses L-seryl-tRNA(Sec) + selenophosphate + H(+) = L-selenocysteinyl-tRNA(Sec) + phosphate. Its pathway is aminoacyl-tRNA biosynthesis; selenocysteinyl-tRNA(Sec) biosynthesis; selenocysteinyl-tRNA(Sec) from L-seryl-tRNA(Sec) (bacterial route): step 1/1. Converts seryl-tRNA(Sec) to selenocysteinyl-tRNA(Sec) required for selenoprotein biosynthesis. In Carboxydothermus hydrogenoformans (strain ATCC BAA-161 / DSM 6008 / Z-2901), this protein is L-seryl-tRNA(Sec) selenium transferase.